The sequence spans 451 residues: Uronate isomerase (451 aa).

This sequence belongs to the metallo-dependent hydrolases superfamily. Uronate isomerase family. As to quaternary structure, homotrimer.

It carries out the reaction D-glucuronate = D-fructuronate. It catalyses the reaction aldehydo-D-galacturonate = keto-D-tagaturonate. The protein operates within carbohydrate metabolism; pentose and glucuronate interconversion. The sequence is that of Uronate isomerase from Thermotoga maritima (strain ATCC 43589 / DSM 3109 / JCM 10099 / NBRC 100826 / MSB8).